A 280-amino-acid chain; its full sequence is Phosphonoacetaldehyde hydrolase (280 aa).

Aspartate 20 serves as the catalytic Nucleophile. Positions 20 and 22 each coordinate Mg(2+). Lysine 61 serves as the catalytic Schiff-base intermediate with substrate. Mg(2+) is bound at residue aspartate 194.

Belongs to the HAD-like hydrolase superfamily. PhnX family. In terms of assembly, homodimer. Mg(2+) is required as a cofactor.

The enzyme catalyses phosphonoacetaldehyde + H2O = acetaldehyde + phosphate + H(+). Its function is as follows. Involved in phosphonate degradation. In Nitratidesulfovibrio vulgaris (strain DSM 19637 / Miyazaki F) (Desulfovibrio vulgaris), this protein is Phosphonoacetaldehyde hydrolase.